A 179-amino-acid chain; its full sequence is Acireductone dioxygenase (179 aa).

Residues H99, H101, E105, and H144 each contribute to the Fe(2+) site. Ni(2+) contacts are provided by H99, H101, E105, and H144.

The protein belongs to the acireductone dioxygenase (ARD) family. In terms of assembly, monomer. The cofactor is Fe(2+). It depends on Ni(2+) as a cofactor.

The catalysed reaction is 1,2-dihydroxy-5-(methylsulfanyl)pent-1-en-3-one + O2 = 3-(methylsulfanyl)propanoate + CO + formate + 2 H(+). The enzyme catalyses 1,2-dihydroxy-5-(methylsulfanyl)pent-1-en-3-one + O2 = 4-methylsulfanyl-2-oxobutanoate + formate + 2 H(+). Its pathway is amino-acid biosynthesis; L-methionine biosynthesis via salvage pathway; L-methionine from S-methyl-5-thio-alpha-D-ribose 1-phosphate: step 5/6. Its function is as follows. Catalyzes 2 different reactions between oxygen and the acireductone 1,2-dihydroxy-3-keto-5-methylthiopentene (DHK-MTPene) depending upon the metal bound in the active site. Fe-containing acireductone dioxygenase (Fe-ARD) produces formate and 2-keto-4-methylthiobutyrate (KMTB), the alpha-ketoacid precursor of methionine in the methionine recycle pathway. Ni-containing acireductone dioxygenase (Ni-ARD) produces methylthiopropionate, carbon monoxide and formate, and does not lie on the methionine recycle pathway. The protein is Acireductone dioxygenase of Exiguobacterium sibiricum (strain DSM 17290 / CCUG 55495 / CIP 109462 / JCM 13490 / 255-15).